The chain runs to 1181 residues: Integrin alpha-7 (1181 aa).

An N-terminal signal peptide occupies residues 1–33; sequence MAGARSRDPWGASGICYLFGSLLVELLFSRAVA. Over 34-1082 the chain is Extracellular; that stretch reads FNLDVMGALR…MAVVAEGVPW (1049 aa). 7 FG-GAP repeats span residues 35-103, 110-175, 185-238, 292-349, 350-411, 412-467, and 471-530; these read NLDV…ETDC, QGAD…IRDE, EGRP…SADL, DRLP…ASRL, VPEV…HWAG, ISPL…GVVA, and QVLE…IAPR. N-linked (GlcNAc...) asparagine glycosylation is present at asparagine 86. Intrachain disulfides connect cysteine 94–cysteine 103, cysteine 140–cysteine 163, and cysteine 184–cysteine 197. 13 residues coordinate Ca(2+): aspartate 372, asparagine 374, aspartate 376, aspartate 380, aspartate 434, asparagine 436, aspartate 438, aspartate 442, aspartate 492, aspartate 494, asparagine 496, tyrosine 498, and aspartate 500. 6 disulfide bridges follow: cysteine 539-cysteine 546, cysteine 552-cysteine 615, cysteine 681-cysteine 687, cysteine 781-cysteine 792, cysteine 939-cysteine 994, and cysteine 1001-cysteine 1006. Residue asparagine 786 is glycosylated (N-linked (GlcNAc...) asparagine). Positions 950 to 961 are enriched in basic and acidic residues; it reads VDSRDRRRRELE. The interval 950-978 is disordered; it reads VDSRDRRRRELEPPEQQEPGERQEPSMSW. The N-linked (GlcNAc...) asparagine glycan is linked to asparagine 989. Asparagine 1025 and asparagine 1045 each carry an N-linked (GlcNAc...) asparagine glycan. A helical transmembrane segment spans residues 1083–1103; the sequence is WVILLAVLAGLLVLALLVLLL. The Cytoplasmic portion of the chain corresponds to 1104–1181; the sequence is WKMGFFKRAK…PDGHPGPGTA (78 aa). Positions 1107–1111 match the GFFKR motif motif; it reads GFFKR. Residues 1138–1181 are disordered; it reads EKTGTILRNNWGSPRREGPDAHPILAADGHPELGPDGHPGPGTA. Tandem repeats lie at residues 1157 to 1160, 1165 to 1168, and 1173 to 1176. Positions 1157–1176 are 3 X 4 AA repeats of D-X-H-P; sequence DAHPILAADGHPELGPDGHP.

Belongs to the integrin alpha chain family. As to quaternary structure, heterodimer of an alpha and a beta subunit. The alpha subunit is composed of a heavy and a light chain linked by a disulfide bond. Alpha-7 associates with beta-1. Interacts with COMP. Interacts (via C-terminus intracellular tail region) with CIB1; the interaction is stabilized/increased in a calcium- and magnesium-dependent manner. ADP-ribosylated on at least two sites of the extracellular domain in skeletal myotubes. Post-translationally, a 70 kDa form is created by proteolytic cleavage. Cleavage is elevated during myogenic differentiation and the cleaved form enhances cell adhesion and spreading on laminin. Isoforms containing segment A are predominantly expressed in skeletal muscle. Isoforms containing segment B are abundantly expressed in skeletal muscle, moderately in cardiac muscle, small intestine, colon, ovary and prostate and weakly in lung and testes. Isoforms containing segment X2D are expressed at low levels in fetal and adult skeletal muscle and in cardiac muscle, but are not detected in myoblasts and myotubes. In muscle fibers isoforms containing segment A and B are expressed at myotendinous and neuromuscular junctions; isoforms containing segment C are expressed at neuromuscular junctions and at extrasynaptic sites. Isoforms containing segments X1 or X2 or, at low levels, X1X2 are expressed in fetal and adult skeletal muscle (myoblasts and myotubes) and cardiac muscle.

It localises to the membrane. Its function is as follows. Integrin alpha-7/beta-1 is the primary laminin receptor on skeletal myoblasts and adult myofibers. During myogenic differentiation, it may induce changes in the shape and mobility of myoblasts, and facilitate their localization at laminin-rich sites of secondary fiber formation. It is involved in the maintenance of the myofibers cytoarchitecture as well as for their anchorage, viability and functional integrity. Isoform Alpha-7X2B and isoform Alpha-7X1B promote myoblast migration on laminin 1 and laminin 2/4, but isoform Alpha-7X1B is less active on laminin 1 (In vitro). Acts as a Schwann cell receptor for laminin-2. Acts as a receptor of COMP and mediates its effect on vascular smooth muscle cells (VSMCs) maturation. Required to promote contractile phenotype acquisition in differentiated airway smooth muscle (ASM) cells. The sequence is that of Integrin alpha-7 (ITGA7) from Homo sapiens (Human).